The primary structure comprises 302 residues: Syntaxin-17 (302 aa).

S2 carries the post-translational modification N-acetylserine. At 2–228 (SEDEEKVKLR…KNLGKAAKYK (227 aa)) the chain is on the cytoplasmic side. K41 bears the N6-acetyllysine mark. Residues 53–123 (EEHINAGRTV…EELKKQFNDE (71 aa)) are a coiled coil. Position 157 is a phosphotyrosine; by ABL1 (Y157). The t-SNARE coiled-coil homology domain maps to 162-224 (IPQDQNAAES…EEGTKNLGKA (63 aa)). Residues 229–249 (LAALPVAGALIGGMVGGPIGL) form a helical membrane-spanning segment. Residues 229-275 (LAALPVAGALIGGMVGGPIGLLAGFKVAGIAAALGGGVLGFTGGKLI) form a necessary and sufficient for localization to autophagosome region. Topologically, residues 250 to 254 (LAGFK) are lumenal. A helical membrane pass occupies residues 255-275 (VAGIAAALGGGVLGFTGGKLI). Topologically, residues 276 to 302 (QRKKQKMMEKLTSSCPDLPSQTDKKCS) are cytoplasmic. Residue S289 is modified to Phosphoserine. Residues 299 to 302 (KKCS) carry the Endoplasmic reticulum retention signal motif.

Belongs to the syntaxin family. Forms a SNARE complex composed of VAMP8, SNAP29 and STX17 involved in fusion of autophagosome with lysosome. Interacts with VAMP7 and VTI1B. Probably interacts with BET1, SCFD1 and SEC22B. Interacts with PTPN2 and ABL1; involved in STX17 phosphorylation. Interacts with COPB1. Interacts with TMED9 and TMED10; the interaction is direct. Interacts with ATG14. Interacts with RUBCNL/PACER; promoting targeting of RUBCNL/PACER to autophagosome. Interacts with VAMP8, SNAP29, VPS39 and VPS41; these interactions are increased in the absence of TMEM39A. Interacts with IRGM; promoting STX17 recruitment to autophagosomes. Interacts with ATG8 proteins GABARAP and MAP1LC3B. Interacts with RNF115; this interaction enhances STX17 stability which in turn promotes autophagosome maturation. Interacts with RAB39A (GTP-bound); the interaction promotes autophagosome-lysosome membrane fusion driven by STX17-SNAP29-VAMP8. Interacts with RAB39B; the interaction may promote a different fonction in autophagy as compared with RAB39A. In terms of assembly, (Microbial infection) The interactions with VAMP8, SNAP29 and VPS41 are decreased in presence of SARS coronavirus-2/SARS-CoV-2 ORF3A protein. Phosphorylated at Tyr-157 probably by ABL1. Dephosphorylation by PTPN2; regulates exit from the endoplasmic reticulum. In terms of processing, (Microbial infection) Cleaved by the L.pneumophila serine protease Lpg1137, impairing endoplasmic reticulum-mitochondria communication, leading to inhibit autophagy.

Its subcellular location is the endoplasmic reticulum membrane. The protein resides in the smooth endoplasmic reticulum membrane. It is found in the endoplasmic reticulum-Golgi intermediate compartment membrane. The protein localises to the cytoplasmic vesicle. It localises to the autophagosome membrane. Its subcellular location is the COPII-coated vesicle membrane. The protein resides in the cytoplasm. It is found in the cytosol. The protein localises to the mitochondrion membrane. It localises to the autolysosome membrane. SNAREs, soluble N-ethylmaleimide-sensitive factor-attachment protein receptors, are essential proteins for fusion of cellular membranes. SNAREs localized on opposing membranes assemble to form a trans-SNARE complex, an extended, parallel four alpha-helical bundle that drives membrane fusion. STX17 is a SNARE of the autophagosome involved in autophagy through the direct control of autophagosome membrane fusion with the lysosome membrane. May also play a role in the early secretory pathway where it may maintain the architecture of the endoplasmic reticulum-Golgi intermediate compartment/ERGIC and Golgi and/or regulate transport between the endoplasmic reticulum, the ERGIC and the Golgi. This chain is Syntaxin-17, found in Homo sapiens (Human).